Reading from the N-terminus, the 68-residue chain is Large ribosomal subunit protein bL35 (68 aa).

This sequence belongs to the bacterial ribosomal protein bL35 family.

The protein is Large ribosomal subunit protein bL35 of Wolbachia pipientis subsp. Culex pipiens (strain wPip).